The sequence spans 505 residues: One cut domain family member 2 (505 aa).

Disordered regions lie at residues 29–94 (LGTL…GTAA), 165–190 (KFHHPHPHHHPHHHHHHHHHHQRLSG), and 275–333 (EQHL…QLEE). Residues 35 to 56 (PVGGGSGGGGGGGGGGGGGGPG) are compositionally biased toward gly residues. Residues 167 to 187 (HHPHPHHHPHHHHHHHHHHQR) are compositionally biased toward basic residues. The CUT DNA-binding region spans 325–411 (VATSGQLEEI…QRMSALRLAA (87 aa)). Positions 427-486 (QKKSRLVFTDLQRRTLFAIFKENKRPSKEMQITISQQLGLELTTVSNFFMNARRRSLEKW) form a DNA-binding region, homeobox.

It belongs to the CUT homeobox family.

The protein localises to the nucleus. Its function is as follows. Transcriptional activator. Activates the transcription of a number of liver genes such as HNF3B. The polypeptide is One cut domain family member 2 (Onecut2) (Mus musculus (Mouse)).